A 313-amino-acid polypeptide reads, in one-letter code: Methionyl-tRNA formyltransferase (313 aa).

109–112 (SLLP) contacts (6S)-5,6,7,8-tetrahydrofolate.

This sequence belongs to the Fmt family.

It catalyses the reaction L-methionyl-tRNA(fMet) + (6R)-10-formyltetrahydrofolate = N-formyl-L-methionyl-tRNA(fMet) + (6S)-5,6,7,8-tetrahydrofolate + H(+). Functionally, attaches a formyl group to the free amino group of methionyl-tRNA(fMet). The formyl group appears to play a dual role in the initiator identity of N-formylmethionyl-tRNA by promoting its recognition by IF2 and preventing the misappropriation of this tRNA by the elongation apparatus. This chain is Methionyl-tRNA formyltransferase, found in Thermotoga sp. (strain RQ2).